We begin with the raw amino-acid sequence, 1377 residues long: DNA-directed RNA polymerase subunit beta' (1377 aa).

Zn(2+) contacts are provided by Cys60, Cys62, Cys75, and Cys78. Positions 449, 451, and 453 each coordinate Mg(2+). The Zn(2+) site is built by Cys777, Cys851, Cys858, and Cys861.

It belongs to the RNA polymerase beta' chain family. As to quaternary structure, the RNAP catalytic core consists of 2 alpha, 1 beta, 1 beta' and 1 omega subunit. When a sigma factor is associated with the core the holoenzyme is formed, which can initiate transcription. Requires Mg(2+) as cofactor. Zn(2+) is required as a cofactor.

The enzyme catalyses RNA(n) + a ribonucleoside 5'-triphosphate = RNA(n+1) + diphosphate. In terms of biological role, DNA-dependent RNA polymerase catalyzes the transcription of DNA into RNA using the four ribonucleoside triphosphates as substrates. This is DNA-directed RNA polymerase subunit beta' from Borrelia turicatae (strain 91E135).